A 378-amino-acid chain; its full sequence is DNA replication and repair protein RecF (378 aa).

31–38 is a binding site for ATP; sequence GENGSGKT.

The protein belongs to the RecF family.

It is found in the cytoplasm. Functionally, the RecF protein is involved in DNA metabolism; it is required for DNA replication and normal SOS inducibility. RecF binds preferentially to single-stranded, linear DNA. It also seems to bind ATP. The polypeptide is DNA replication and repair protein RecF (Teredinibacter turnerae (strain ATCC 39867 / T7901)).